Here is a 294-residue protein sequence, read N- to C-terminus: 4-hydroxy-tetrahydrodipicolinate synthase (294 aa).

Threonine 45 is a binding site for pyruvate. The active-site Proton donor/acceptor is the tyrosine 133. Lysine 162 (schiff-base intermediate with substrate) is an active-site residue. Isoleucine 204 lines the pyruvate pocket.

This sequence belongs to the DapA family. Homotetramer; dimer of dimers.

Its subcellular location is the cytoplasm. The enzyme catalyses L-aspartate 4-semialdehyde + pyruvate = (2S,4S)-4-hydroxy-2,3,4,5-tetrahydrodipicolinate + H2O + H(+). The protein operates within amino-acid biosynthesis; L-lysine biosynthesis via DAP pathway; (S)-tetrahydrodipicolinate from L-aspartate: step 3/4. With respect to regulation, is allosterically regulated by the feedback inhibitor (S)-lysine. Catalyzes the condensation of (S)-aspartate-beta-semialdehyde [(S)-ASA] and pyruvate to 4-hydroxy-tetrahydrodipicolinate (HTPA). This chain is 4-hydroxy-tetrahydrodipicolinate synthase, found in Agrobacterium fabrum (strain C58 / ATCC 33970) (Agrobacterium tumefaciens (strain C58)).